Reading from the N-terminus, the 268-residue chain is uncharacterized protein (268 aa).

Helical transmembrane passes span 169–189, 190–210, and 225–245; these read AIIYVFMCLFFSLFWFYQGFA, GVKTSILTGTAEIGLAILWLL, and IFAGFACLGSEIFMWVLLSVF.

The protein resides in the cell membrane. This is an uncharacterized protein from Bacillus subtilis (strain 168).